We begin with the raw amino-acid sequence, 71 residues long: Large ribosomal subunit protein bL31 (71 aa).

Residues Cys16, Cys18, Cys37, and Cys40 each coordinate Zn(2+).

The protein belongs to the bacterial ribosomal protein bL31 family. Type A subfamily. In terms of assembly, part of the 50S ribosomal subunit. The cofactor is Zn(2+).

In terms of biological role, binds the 23S rRNA. The chain is Large ribosomal subunit protein bL31 from Pseudomonas aeruginosa (strain LESB58).